The sequence spans 132 residues: Small ribosomal subunit protein uS8 (132 aa).

This sequence belongs to the universal ribosomal protein uS8 family. Part of the 30S ribosomal subunit. Contacts proteins S5 and S12.

Functionally, one of the primary rRNA binding proteins, it binds directly to 16S rRNA central domain where it helps coordinate assembly of the platform of the 30S subunit. This chain is Small ribosomal subunit protein uS8, found in Caulobacter sp. (strain K31).